The primary structure comprises 441 residues: Ribosomal protein uS12 methylthiotransferase RimO (441 aa).

Residues 7-117 enclose the MTTase N-terminal domain; sequence PKISFVSLGC…VLEAVHRARP (111 aa). [4Fe-4S] cluster is bound by residues Cys-16, Cys-52, Cys-81, Cys-148, Cys-152, and Cys-155. The Radical SAM core domain occupies 134-371; sequence LTPRHYAYLK…MARQQAISAR (238 aa). Residues 374 to 440 enclose the TRAM domain; sequence KRKVGTRQQV…AYDLHGTVAG (67 aa).

This sequence belongs to the methylthiotransferase family. RimO subfamily. [4Fe-4S] cluster serves as cofactor.

The protein localises to the cytoplasm. It carries out the reaction L-aspartate(89)-[ribosomal protein uS12]-hydrogen + (sulfur carrier)-SH + AH2 + 2 S-adenosyl-L-methionine = 3-methylsulfanyl-L-aspartate(89)-[ribosomal protein uS12]-hydrogen + (sulfur carrier)-H + 5'-deoxyadenosine + L-methionine + A + S-adenosyl-L-homocysteine + 2 H(+). Its function is as follows. Catalyzes the methylthiolation of an aspartic acid residue of ribosomal protein uS12. This chain is Ribosomal protein uS12 methylthiotransferase RimO, found in Rhodopseudomonas palustris (strain ATCC BAA-98 / CGA009).